The chain runs to 386 residues: DNA-directed RNA polymerase subunit Rpo1C (386 aa).

The protein belongs to the RNA polymerase beta' chain family. As to quaternary structure, part of the RNA polymerase complex.

It is found in the cytoplasm. It carries out the reaction RNA(n) + a ribonucleoside 5'-triphosphate = RNA(n+1) + diphosphate. Its function is as follows. DNA-dependent RNA polymerase (RNAP) catalyzes the transcription of DNA into RNA using the four ribonucleoside triphosphates as substrates. Forms part of the jaw domain. This Methanococcus maripaludis (strain DSM 14266 / JCM 13030 / NBRC 101832 / S2 / LL) protein is DNA-directed RNA polymerase subunit Rpo1C.